Reading from the N-terminus, the 921-residue chain is Respiratory burst oxidase homolog protein D (921 aa).

A disordered region spans residues Met1–Gly71. At Met1–Arg376 the chain is on the cytoplasmic side. Phosphoserine is present on residues Ser8, Ser9, Ser26, and Ser39. Positions Asn21–Ile31 are enriched in polar residues. The span at Arg44–Ala53 shows a compositional bias: basic residues. 2 EF-hand-like regions span residues Ser193–Ala203 and Asn230–Gln241. 2 consecutive EF-hand domains span residues Ser253–Ala288 and Gln297–Gln332. Residues Asp266, Asp268, Asp270, Arg272, and Glu277 each contribute to the Ca(2+) site. Phosphoserine occurs at positions 339, 343, and 347. The helical transmembrane segment at Leu377–Gln397 threads the bilayer. Over Tyr398–Val461 the chain is Extracellular. A Ferric oxidoreductase domain is found at Lys415–Ile572. The chain crosses the membrane as a helical span at residues Ile462–Phe482. The Cytoplasmic portion of the chain corresponds to Pro483–Gly516. Residues Trp517–Phe537 form a helical membrane-spanning segment. Topologically, residues Arg538–Tyr559 are extracellular. Residues Thr560 to Leu580 form a helical membrane-spanning segment. Over Thr581 to Thr588 the chain is Cytoplasmic. The helical transmembrane segment at Thr589–Leu606 threads the bilayer. The Extracellular portion of the chain corresponds to Arg607 to Lys734. In terms of domain architecture, FAD-binding FR-type spans Ser611–Asp732. A helical membrane pass occupies residues Lys735 to Leu755. Over Lys756 to Phe921 the chain is Cytoplasmic.

This sequence belongs to the RBOH (TC 5.B.1.3) family. In terms of assembly, monomer and homodimer. Interacts with BIK1 and FLS2. Interacts with PBL13. Binds to SIK1 upon flagellin perception and becomes activated by phosphorylation. Post-translationally, phosphorylated at Ser-39, Ser-343 and Ser-347 by BIK1 upon flagellin (flg22) treatment. Activated by phosphorylation at Ser-347 mediated by SIK1 and at Ser-8, Ser-9 and Ser-339 upon flagellin (e.g. flg22) perception. More abundant in roots than in leaves, stems or inflorescences. Expressed in mesophyll and guard cells.

It localises to the membrane. With respect to regulation, inhibited by diphenylene iodinium (DPI). Calcium-dependent NADPH oxidase that generates superoxide. Involved in the generation of reactive oxygen species (ROS) during incompatible interactions with pathogens, in response to pathogen-associated molecular pattern (PAMP)-triggered immunity (PTI) signaling and in UV-B and abscisic acid ROS-dependent signaling and via SIK1 mediated activation by phosphorylation. Might be required for ROS signal amplification during light stress. The polypeptide is Respiratory burst oxidase homolog protein D (Arabidopsis thaliana (Mouse-ear cress)).